The sequence spans 565 residues: Ubiquitin carboxyl-terminal hydrolase 21 (565 aa).

Residues 1–14 (MPQASEHRLGRTRE) show a composition bias toward basic and acidic residues. Disordered regions lie at residues 1–103 (MPQA…LPLP), 109–128 (ARSK…ALGG), and 142–163 (LALR…LGGF). The span at 42 to 57 (APGPNPMLRPLPPRPG) shows a compositional bias: pro residues. Residues 58-70 (PPEERLKKLELGR) are compositionally biased toward basic and acidic residues. Residues 71–82 (GRTSGPRPSGPL) are compositionally biased toward low complexity. A Nuclear export signal motif is present at residues 134–152 (ELGAALSRLALRPEPPPLR). The 347-residue stretch at 212–558 (VGLRNLGNTC…EGYVLFYQLM (347 aa)) folds into the USP domain. C221 acts as the Nucleophile in catalysis. Zn(2+) contacts are provided by C384, C387, C437, and C440. Catalysis depends on H518, which acts as the Proton acceptor.

The protein belongs to the peptidase C19 family. USP21 subfamily. Interacts with BEND3.

The protein resides in the cytoplasm. Its subcellular location is the nucleus. It catalyses the reaction Thiol-dependent hydrolysis of ester, thioester, amide, peptide and isopeptide bonds formed by the C-terminal Gly of ubiquitin (a 76-residue protein attached to proteins as an intracellular targeting signal).. Functionally, deubiquitinating enzyme that hydrolyzes 'Lys-6'- and 'Lys-11'-linked polyubiquitin. Also hydrolyzes heterotypic (mixed and branched) and homotypic chains. Important regulator of energy metabolism. Glucose and fatty acids trigger its nuclear translocation by CBP-dependent acetylation. In the nucleus, deubiquitinates and stabilizes the nuclear receptor PPARD regulating the expression of various genes involved in glucose and lipid metabolism and oxidative phosphorylation. Also acts as a negative regulator of the ribosome quality control (RQC) by mediating deubiquitination of 40S ribosomal proteins RPS10/eS10 and RPS20/uS10, thereby antagonizing ZNF598-mediated 40S ubiquitination. This Bos taurus (Bovine) protein is Ubiquitin carboxyl-terminal hydrolase 21 (USP21).